The primary structure comprises 1668 residues: Probable histone acetyltransferase HAC-like 1 (1668 aa).

Disordered regions lie at residues 1 to 34, 459 to 493, and 528 to 551; these read MNVGQAAHLSGQMSGQAPQTNQVGGSGVGGADGL, QQQPNSQHQQSILRSNSLKQPQLSSSHSMQLSEQG, and KGGQVFGHLSSSQNFHSNASHDSQ. Over residues 11 to 23 the composition is skewed to polar residues; it reads GQMSGQAPQTNQV. A compositionally biased stretch (low complexity) spans 459 to 469; sequence QQQPNSQHQQS. Composition is skewed to polar residues over residues 470–491 and 536–551; these read ILRSNSLKQPQLSSSHSMQLSE and LSSSQNFHSNASHDSQ. A TAZ-type 1 zinc finger spans residues 651–732; that stretch reads AAGNIYYFRQ…DLQCPVCSNA (82 aa). Residues 886–899 are compositionally biased toward basic and acidic residues; it reads KETSETAPEVKNEA. Residues 886–912 are disordered; it reads KETSETAPEVKNEANDSTDITVSKSGK. Residues 900-909 are compositionally biased toward polar residues; sequence NDSTDITVSK. Residues 1002–1079 form a PHD-type zinc finger; sequence HFFCIPCYNE…EYTCPNCYVE (78 aa). The region spanning 1094-1530 is the CBP/p300-type HAT domain; that stretch reads VLGAKDLPRT…VLYHLHNPTA (437 aa). Residues 1217-1219, 1236-1237, and tryptophan 1292 contribute to the acetyl-CoA site; these read LDS and RT. Residues 1342–1365 are a coiled coil; the sequence is GAAEDMINQLRQEEDDRKQQKKGK. The segment at 1412-1475 adopts a ZZ-type zinc-finger fold; that stretch reads HLQYSCSHCC…TLHPVDIVGL (64 aa). Cysteine 1417, cysteine 1420, cysteine 1432, cysteine 1435, cysteine 1441, cysteine 1444, histidine 1457, and histidine 1465 together coordinate Zn(2+). The TAZ-type 2 zinc finger occupies 1553–1634; it reads EVCPDFDLRK…GCNVPRCRDL (82 aa). Residues 1630 to 1650 are a coiled coil; sequence RCRDLKEHLRRLQQQSDSRRR.

It is found in the nucleus. The enzyme catalyses L-lysyl-[protein] + acetyl-CoA = N(6)-acetyl-L-lysyl-[protein] + CoA + H(+). Acetyltransferase enzyme. Acetylates histones, giving a specific tag for transcriptional activation. This Oryza sativa subsp. japonica (Rice) protein is Probable histone acetyltransferase HAC-like 1.